A 202-amino-acid chain; its full sequence is Peroxynitrite isomerase (202 aa).

A GXWXGXG motif is present at residues 21-27 (GEWEGRG). His193 is a heme b binding site.

Belongs to the nitrobindin family. As to quaternary structure, homodimer. The cofactor is heme b.

It catalyses the reaction peroxynitrite = nitrate. It functions in the pathway nitrogen metabolism. In terms of biological role, heme-binding protein able to scavenge peroxynitrite and to protect free L-tyrosine against peroxynitrite-mediated nitration, by acting as a peroxynitrite isomerase that converts peroxynitrite to nitrate. Therefore, this protein likely plays a role in peroxynitrite sensing and in the detoxification of reactive nitrogen and oxygen species (RNS and ROS, respectively). Is able to bind nitric oxide (NO) in vitro, but may act as a sensor of peroxynitrite levels in vivo. In Pseudarthrobacter chlorophenolicus (strain ATCC 700700 / DSM 12829 / CIP 107037 / JCM 12360 / KCTC 9906 / NCIMB 13794 / A6) (Arthrobacter chlorophenolicus), this protein is Peroxynitrite isomerase.